Here is a 299-residue protein sequence, read N- to C-terminus: Somaliensene A/B synthase (299 aa).

7 consecutive transmembrane segments (helical) span residues 32 to 49 (WTTL…AVHT), 56 to 72 (TAVA…LFVY), 110 to 132 (IAVR…ALLW), 153 to 171 (LYAG…EIVA), 177 to 194 (AWRW…LMSV), 222 to 241 (VFLC…FLMA), and 247 to 269 (WWIV…RVVL).

The protein belongs to the UbiA prenyltransferase family. Requires Mg(2+) as cofactor.

The protein localises to the cell membrane. The catalysed reaction is (2E,6E,10E,14E)-geranylfarnesyl diphosphate = somaliensene A + diphosphate. The enzyme catalyses (2E,6E,10E,14E)-geranylfarnesyl diphosphate = (-)-somaliensene B + diphosphate. It participates in secondary metabolite biosynthesis; terpenoid biosynthesis. Sesterterpene cyclase, which converts geranylfarnesyl diphosphate (GFPP) into the terpenes somaliensene A and somaliensene B. The protein is Somaliensene A/B synthase of Streptomyces somaliensis (strain ATCC 33201 / DSM 40738 / JCM 12659 / KCTC 9044 / NCTC 11332 / NRRL B-12077 / IP 733).